A 62-amino-acid polypeptide reads, in one-letter code: Large ribosomal subunit protein bL28 (62 aa).

Belongs to the bacterial ribosomal protein bL28 family.

In Streptococcus uberis (strain ATCC BAA-854 / 0140J), this protein is Large ribosomal subunit protein bL28.